The following is a 351-amino-acid chain: Selenide, water dikinase (351 aa).

U15 is a catalytic residue. U15 is a non-standard amino acid (selenocysteine). ATP contacts are provided by residues K18 and 47 to 49; that span reads DNE. D50 contacts Mg(2+). ATP-binding positions include D67, D90, and 138-140; that span reads GHS. D90 is a Mg(2+) binding site. D227 provides a ligand contact to Mg(2+).

Belongs to the selenophosphate synthase 1 family. Class I subfamily. In terms of assembly, homodimer. Mg(2+) serves as cofactor.

It catalyses the reaction hydrogenselenide + ATP + H2O = selenophosphate + AMP + phosphate + 2 H(+). Functionally, synthesizes selenophosphate from selenide and ATP. This Nitratidesulfovibrio vulgaris (strain ATCC 29579 / DSM 644 / CCUG 34227 / NCIMB 8303 / VKM B-1760 / Hildenborough) (Desulfovibrio vulgaris) protein is Selenide, water dikinase.